The primary structure comprises 304 residues: Choline-phosphate cytidylyltransferase 2 (304 aa).

Residues 28-36 (IFDLFHFGH) and lysine 66 each bind CTP. Residues lysine 66 and tryptophan 95 each contribute to the substrate site. CTP is bound by residues 112–113 (HD), tyrosine 117, and 142–146 (RTEGI). Residues 266–292 (QNGLTISKDNDDEQMSDDNEFAEEDCV) are disordered. The span at 275-291 (NDDEQMSDDNEFAEEDC) shows a compositional bias: acidic residues.

The protein belongs to the cytidylyltransferase family.

The catalysed reaction is phosphocholine + CTP + H(+) = CDP-choline + diphosphate. The protein operates within phospholipid metabolism; phosphatidylcholine biosynthesis; phosphatidylcholine from phosphocholine: step 1/2. In terms of biological role, plays an important role in the biosynthesis of the phospholipid phosphatidylcholine. Catalyzes the formation of CDP-choline. In Arabidopsis thaliana (Mouse-ear cress), this protein is Choline-phosphate cytidylyltransferase 2.